A 2058-amino-acid polypeptide reads, in one-letter code: MIVDLIQSARQGEWAQVRQLLLKHWLVQVPEVFEVNSDLPWDNTAANERILGSQGEILLAPLVSAFVLDVRNTKSTLEAMNGIAGVDPARRGQICGHVFKNGELTYTCLDCATDGTCVMCLQCFEVSIHKSHKYKMHSSSGSGYCDCGDADAWTEGYACANHEKKDDEEAAVLAPELKKRCEQLVEIILQFSLSMITHKDDLKLPEIFEKMKPEVTNEAQQYLTVLYNDETHTYESVIKVLELYIHCTKDQAMLVATIVDREGRSAVKLGSKADCTKAKDDVQRKTARDPTSIRRSSNHNLPLSVKVMDTTLFALQNFSISLLTWLNTQMDVFPPLREIVGEILLSSKFALKKNYTRKMKSEDQRLVAGIIRNVMVLPDDEEEELFALDGRMDVDEMDDDDIGGEALQMEIDADDEEEITAALAGVSEHQESPGPSRDSSTFTMLENILLQDTQMWKAGRSILHQMLMRTVFMIYDQKVRFAKAFMLHYNEIYEDFIKDDHEMDVSVVGLSVQFMTVPSLARKLVAEDQAFSVISKAIRDQTDKFVKYYNDGKIARFDFTSRSFPPELRRSLHITRDMAYILNAVPSESDWNRELIDGFVQGFADFLLFLQHLQGMDEVKRQAVEHQVWESEWETAFNILLRLKDAISMIIGWAETNEEVHNRLMIMCLELMNRMPPVYTKSEEDTYELTVTINGESCRISHFDVLKSSTSVHQPVVRIIAGLFSASNYTGFLLNRSNNSHTSLNQERIKELINCKDETNLYELSLRVLVLCAQSNATLWRRNGFSLINQIHNYFSPLCRNEMFDRDVLMMQVGAALTPSTKFIFHLLHRFRLFKWATSEFEQDKANEKPAKPESEDLSKTLVMIAEEFIQCLILILCERYTYGVGKTRPMDQMKREVIHILCTGSHTFSHIQQKMSHDINSKRLSLHEAVNLVADFRKPLATTAGQFHCKESSLPTYSPFFMHYSKSDQSAAEQSQARVRAKMEKSVRACAPPILPDFQTFFERIPEILTTNVLIHVVRLIIDRTARRSRFSSDRLFHKTLYLIGIALNEEEKNPSFGFTQRAEESIGLLSLLEGLVGKPESSICPILLEVTVEKYRKLIKARAGVPEAAPAPENKPAQSEEEIKAKRAARAAEMRQKAMAKMSNMQSKFMKKIEDEEKKDESQTPSEKSETVVKKDDYDNKHFFDEDVVKQVGHDFPVCIGANKWHAELVKPRTLTCILCQEDEIIAPQQGKPMVCAAFIQQSQLFTHKNKNGELMTASSGTISTRDLLTAPATLQYGVDVSTCSHSMHYECYRSLAEANRSRESLRARQVGQHSHKMVDTENGEYQCPLCKRLSNAAIPVLPAYQLTNQNGFSTVSGAGKENFDTWVARVKRNLEMPLSSESVSKKGHSRKRSHSERSLLDLEKLSKDPDTANTSAGVLQFGAMEMSSATHMPASAESQMLMTTSPSQDDVEFYNELAAMFVDQDVNNTTSPAATPETIPAIGSSSRIPESQESGKKPLSSQIQHVLYSLIRPFPALINSNRICSSSFEGFEEPIKDLGKNMMKFRKRGNELKTNFIEKHLKGYVISTVTWQSTAHVARAISSYLHYDKKPLFGALNTRQRDCLSAMARLCASLSHNMQFLLHAVSDMLRVFLCEPPRPKLAQTPGSPLLSAPSTSSFTPAPAQIPHSGTNFAFLVQLFNPAGPRKNVNLNILQIDILSLAISLMMTIGWTWNNGTQSMNSSSTHQKARLLTPDGSVDEAYVLRLSLLAHYFQIIATHSEADGNDVNMEEEQESQMEVDPVAAQTIRKLYALCHPFDGPLRRVDILWRKMEEGAQSLLRPIALLYHFITLVDPPEALKDPSINSSEPLFRYLGLPHKIEEQISGSMLEKLFTMWSSSIPSDQALRQDLVVQPVRPNLLVELPEKYSQLINQVATFKCPTIPIEESTSNVPTLCLVCGTILCSQAYCCQKIINKQSYGACRYHMSQCSGSVGMFLRVRDCSLVLMTTRKRGCFRPAPYVDEFGEVDQGFRRGNPLHLNPELYQKLKSLWLQQGITEEVVNYNEIDFRNVQYDWGHF.

Residues 93 to 164 (QICGHVFKNG…EGYACANHEK (72 aa)) form a UBR-type zinc finger. Residues 1107–1175 (VPEAAPAPEN…TPSEKSETVV (69 aa)) are disordered. The span at 1108–1119 (PEAAPAPENKPA) shows a compositional bias: low complexity. Composition is skewed to basic and acidic residues over residues 1123 to 1138 (EEIKAKRAARAAEMRQ) and 1153 to 1175 (KKIEDEEKKDESQTPSEKSETVV). The segment at 1217-1335 (LTCILCQEDE…GEYQCPLCKR (119 aa)) adopts an RING-type; atypical zinc-finger fold. Disordered regions lie at residues 1381-1416 (LSSESVSKKGHSRKRSHSERSLLDLEKLSKDPDTAN) and 1475-1499 (PAATPETIPAIGSSSRIPESQESGK). Residues 1388–1397 (KKGHSRKRSH) show a composition bias toward basic residues. Residues 1398 to 1413 (SERSLLDLEKLSKDPD) show a composition bias toward basic and acidic residues. The segment covering 1486 to 1495 (GSSSRIPESQ) has biased composition (polar residues). The chain crosses the membrane as a helical span at residues 1695–1715 (ILQIDILSLAISLMMTIGWTW).

The protein belongs to the E3 ubiquitin-protein ligase UBR1-like family. In terms of assembly, interacts with ubc-1. Component of a complex containing at least ced-3, ubr-1 and possibly ate-1. Within complex interacts with ced-3 (via the p17 subunit); this interaction is required for the ced-3-mediated cleavage and subsequent degradation of the heterochronic protein lin-28. Expressed in pharyngeal muscles, body wall muscles and a subset of neurons throughout postembryonic development. Prominently expressed in premotor interneurons, but not expressed in ventral cord motor neurons. Weakly expressed in hypodermal seam cells.

The protein localises to the membrane. The enzyme catalyses S-ubiquitinyl-[E2 ubiquitin-conjugating enzyme]-L-cysteine + [acceptor protein]-L-lysine = [E2 ubiquitin-conjugating enzyme]-L-cysteine + N(6)-ubiquitinyl-[acceptor protein]-L-lysine.. It functions in the pathway protein modification; protein ubiquitination. Functionally, E3 ubiquitin-protein ligase which is a component of the N-end rule pathway. Recognizes and binds to proteins bearing specific N-terminal residues that are destabilizing according to the N-end rule, leading to their ubiquitination and subsequent degradation. In complex with ced-3, required for the ced-3-mediated cleavage and subsequent degradation of the heterochronic protein lin-28 to regulate seam cell fate patterning during larval development. Negatively regulates glutamate metabolism through the aspartate aminotransferase got-1.2. Modulation of glutamate levels most likely controls locomotory behavior, in particular backwards locomotion or 'reversals'. This is E3 ubiquitin-protein ligase ubr-1 from Caenorhabditis elegans.